Reading from the N-terminus, the 345-residue chain is Nuclear distribution protein nudE-like 1 (345 aa).

Residues Gln28–Val190 are a coiled coil. A self-association region spans residues Val56–Ser166. Positions Asp64 to Glu189 are interaction with KATNB1. Residues Tyr114–Ile133 are required for interaction with PAFAH1B1. Residues Arg175–Val345 are interaction with CENPF. The interaction with YWHAE stretch occupies residues Glu189–Val256. Residues Thr191–Val345 are interaction with NEFL. Residues Ala195–Val256 are interaction with KATNA1. Position 215 is a phosphoserine (Ser215). Residues Pro217–Gly240 are disordered. Phosphothreonine is present on Thr219. Phosphoserine is present on Ser231. The interval Thr241–Gln280 is interaction with DISC1. Position 242 is a phosphoserine; by CDK1 (Ser242). Thr245 is modified (phosphothreonine; by CDK1 and MAPK1). The tract at residues Val256 to Val291 is required for localization to the centrosome and interaction with dynein, dynactin, tubulin gamma, PCM1 and PCNT. Residue Cys273 is the site of S-palmitoyl cysteine; by ZDHHC2, ZDHHC3 and ZDHHC7 attachment. The interval Lys314–Val345 is disordered. Residues Leu329–Gly339 are compositionally biased toward low complexity. Ser344 bears the Phosphoserine mark.

The protein belongs to the nudE family. In terms of assembly, interacts with PLEKHM1 (via N- and C-terminus). Interacts with dynactin, PCM1 and PCNT. Interacts (via C-terminus) with CENPF. Self-associates. Interacts with DISC1, dynein, tubulin gamma, KATNA1, KATNB1, microtubules, PAFAHB1 and YWHAE. Interacts directly with NEFL and indirectly with NEFH. Interacts with ZNF365. Interacts with GTP-bound RAB9A; the interaction may lead to RAB9A-dynein motor tethering. Phosphorylated by CDK1 and MAPK1. Phosphorylated in mitosis. Phosphorylated by CDK5. Phosphorylation by CDK5 promotes interaction with KATNA1 and YWHAE. In terms of processing, palmitoylation at Cys-273 reduces affinity for dynein. Expressed in brain, liver, lung and testis (at protein level). Expressed in brain, epididymis, eye, heart, kidney, large intestine, liver, ovary, pancreas, prostate, skeletal muscle, smooth muscle, spleen, submaxillary gland, testis, thymus and thyroid. Within the brain expression is pronounced in the cortex, hippocampus, olfactory bulb, striatum, thalamic and hypothalamic structures and in the molecular layer of the cerebellum. Largely excluded from cortical progenitor cells which express NDE1.

The protein resides in the cytoplasm. The protein localises to the cytoskeleton. It localises to the microtubule organizing center. It is found in the centrosome. Its subcellular location is the chromosome. The protein resides in the centromere. The protein localises to the kinetochore. It localises to the spindle. Its function is as follows. Required for organization of the cellular microtubule array and microtubule anchoring at the centrosome. May regulate microtubule organization at least in part by targeting the microtubule severing protein KATNA1 to the centrosome. Also positively regulates the activity of the minus-end directed microtubule motor protein dynein. May enhance dynein-mediated microtubule sliding by targeting dynein to the microtubule plus ends. Required for several dynein- and microtubule-dependent processes such as the maintenance of Golgi integrity, the centripetal motion of secretory vesicles and the coupling of the nucleus and centrosome. Also required during brain development for the migration of newly formed neurons from the ventricular/subventricular zone toward the cortical plate. Plays a role, together with DISC1, in the regulation of neurite outgrowth. Required for mitosis in some cell types but appears to be dispensible for mitosis in cortical neuronal progenitors, which instead requires NDE1. Facilitates the polymerization of neurofilaments from the individual subunits NEFH and NEFL. Positively regulates lysosome peripheral distribution and ruffled border formation in osteoclasts. Plays a role, together with DISC1, in the regulation of neurite outgrowth. May act as a RAB9A/B effector that tethers RAB9-associated late endosomes to the dynein motor for their retrograde transport to the trans-Golgi network. This is Nuclear distribution protein nudE-like 1 from Mus musculus (Mouse).